Here is a 269-residue protein sequence, read N- to C-terminus: Sulfur carrier protein FdhD (269 aa).

The Cysteine persulfide intermediate role is filled by cysteine 111.

This sequence belongs to the FdhD family.

It is found in the cytoplasm. Its function is as follows. Required for formate dehydrogenase (FDH) activity. Acts as a sulfur carrier protein that transfers sulfur from IscS to the molybdenum cofactor prior to its insertion into FDH. This chain is Sulfur carrier protein FdhD, found in Brucella abortus biovar 1 (strain 9-941).